A 410-amino-acid polypeptide reads, in one-letter code: MSRDPKLSLSKFLECLNEIEHEFLRDKVEHRPVLVRKLQELQQKTPKHVTNLPNDPETIQQIHQIAHRLEVAVKVFLHIDRKFVSLRSDVVEDTSKALQEVNVASPAVEYRNLSEDLPAYHMRKHFLHTLDSPYPTQEEKETLVRLTNESTARVGQSSVNRPPLEVHQLTLWFINARRRSGWSHILKKFAREDRSRMKHLVRAKLSSSNQSTPPSLTSEKPSDDLDVVLSDNLGRPLTLADKQQFEDDWASMISWIKYGVKEKVGDWVYDLCAASKKTPKPGMPRPVTTVAKRQPARKTKPAAKPKSRTANPRASTTPSIDSTLDSSKLESTPELSMCSTADTSFSTFGSSLSMSHYDPFQYGNDILQSPTFKARGNRKVKALPKRAGKQQPDEIDNGKIPFFCLSIAFV.

The segment at 1-110 (MSRDPKLSLS…VNVASPAVEY (110 aa)) is variable domain between B alleles. The homeobox; TALE-type DNA-binding region spans 107–184 (AVEYRNLSED…NARRRSGWSH (78 aa)). Residues 111–410 (RNLSEDLPAY…PFFCLSIAFV (300 aa)) are highly conserved between B alleles. Disordered regions lie at residues 202–224 (RAKL…PSDD), 278–335 (TPKP…TPEL), and 373–393 (KARG…QQPD). The segment covering 205–219 (LSSSNQSTPPSLTSE) has biased composition (polar residues). The Nuclear localization signal motif lies at 276 to 308 (KKTPKPGMPRPVTTVAKRQPARKTKPAAKPKSR). Residues 294–307 (QPARKTKPAAKPKS) are compositionally biased toward basic residues. The segment covering 312-335 (PRASTTPSIDSTLDSSKLESTPEL) has biased composition (polar residues). A not essential for B6 function region spans residues 333–410 (PELSMCSTAD…PFFCLSIAFV (78 aa)). A compositionally biased stretch (basic residues) spans 375 to 388 (RGNRKVKALPKRAG).

This sequence belongs to the TALE/M-ATYP homeobox family.

The protein resides in the nucleus. In terms of biological role, the B locus has at least 25 alleles, and any combination of two different B alleles yields a multimeric regulatory protein, that activates genes responsible for the pathogenicity and for the sexual development of the fungus within the corn plant. This is Mating-type locus allele B6 protein from Mycosarcoma maydis (Corn smut fungus).